A 37-amino-acid polypeptide reads, in one-letter code: MKVRPSVKPICEKCKVIRRRGKVMVICENPKHKQKQG.

It belongs to the bacterial ribosomal protein bL36 family.

The polypeptide is Large ribosomal subunit protein bL36 (Bacillus anthracis (strain A0248)).